The chain runs to 475 residues: Cysteine--tRNA ligase (475 aa).

C28 serves as a coordination point for Zn(2+). A 'HIGH' region motif is present at residues 30–40 (PTVYDYAHIGN). C213, H238, and E242 together coordinate Zn(2+). Positions 270–274 (KMSKS) match the 'KMSKS' region motif. K273 is an ATP binding site.

The protein belongs to the class-I aminoacyl-tRNA synthetase family. Monomer. Requires Zn(2+) as cofactor.

It is found in the cytoplasm. The enzyme catalyses tRNA(Cys) + L-cysteine + ATP = L-cysteinyl-tRNA(Cys) + AMP + diphosphate. This Chlamydia muridarum (strain MoPn / Nigg) protein is Cysteine--tRNA ligase (cysS).